A 379-amino-acid polypeptide reads, in one-letter code: MSMSNSLKKLSSCVLIDLDGTLINTDGVVGDILRKYLCKYGKQWDGRESLKIVGKTPVEAATTIVEDYELPCKVDEFNSEFYPLFSAQMDKIKSLPGANRLIRHLKCHGVPVALASNSSRANIESKISYHEGWKECFSVIVGSDEVSKGKPSPDIFLEAAKRLKKDPADCLVIEDSVPGVMAGKAAGTKVIAVPSLPKQTHLYTSADEVINSLLDIRLEKWGLPPFQDWIENTLPIDPWHIGGPVIKGFGRGSKVLGIPTANLSTKDYADELVEHPSGVYFGWAGLAKRGVFKMVMSIGWNPYFNNKEKTIEPWLLHDFTEDFYGEELRLIIVGYIRPEANFSSLESLIAKIHEDREVAEKALDLPSYAKFKGDPYLTK.

The residue at position 2 (Ser-2) is an N-acetylserine. Asp-17 (nucleophile; for FMN phosphatase activity) is an active-site residue. The Mg(2+) site is built by Asp-17 and Asp-19. Asp-19 (proton donor; for FMN phosphatase activity) is an active-site residue. Gly-248, Lys-254, Thr-260, and Asn-262 together coordinate ATP. A Mg(2+)-binding site is contributed by Thr-260. Glu-312 acts as the Nucleophile; for riboflavin kinase activity in catalysis. ATP is bound by residues Leu-315, His-317, and Tyr-324. 2 residues coordinate FMN: Arg-337 and Phe-342.

The protein in the N-terminal section; belongs to the HAD-like hydrolase superfamily. CbbY/CbbZ/Gph/YieH family. It in the C-terminal section; belongs to the flavokinase family. In terms of assembly, monomer. Mg(2+) is required as a cofactor.

The enzyme catalyses riboflavin + ATP = FMN + ADP + H(+). It catalyses the reaction FMN + H2O = riboflavin + phosphate. It functions in the pathway cofactor biosynthesis; FMN biosynthesis; FMN from riboflavin (ATP route): step 1/1. Bifunctional enzyme that catalyzes the hydrolysis of flavin-mononucleotide (FMN) to riboflavin (vitamin B2) and the phosphorylation of riboflavin to form (FMN) coenzyme. The chain is Bifunctional riboflavin kinase/FMN phosphatase from Arabidopsis thaliana (Mouse-ear cress).